The primary structure comprises 429 residues: Enolase (429 aa).

(2R)-2-phosphoglycerate is bound at residue Q163. The active-site Proton donor is E205. The Mg(2+) site is built by D242, E287, and D314. Positions 339, 368, 369, and 390 each coordinate (2R)-2-phosphoglycerate. K339 functions as the Proton acceptor in the catalytic mechanism.

The protein belongs to the enolase family. Mg(2+) is required as a cofactor.

The protein localises to the cytoplasm. The protein resides in the secreted. Its subcellular location is the cell surface. The catalysed reaction is (2R)-2-phosphoglycerate = phosphoenolpyruvate + H2O. It participates in carbohydrate degradation; glycolysis; pyruvate from D-glyceraldehyde 3-phosphate: step 4/5. Functionally, catalyzes the reversible conversion of 2-phosphoglycerate (2-PG) into phosphoenolpyruvate (PEP). It is essential for the degradation of carbohydrates via glycolysis. The protein is Enolase of Cupriavidus taiwanensis (strain DSM 17343 / BCRC 17206 / CCUG 44338 / CIP 107171 / LMG 19424 / R1) (Ralstonia taiwanensis (strain LMG 19424)).